The sequence spans 382 residues: Lysophosphatidylserine lipase ABHD12 (382 aa).

Over residues 1-12 (MRKRKGSADHDS) the composition is skewed to basic and acidic residues. The disordered stretch occupies residues 1–45 (MRKRKGSADHDSSFTATLTDGSSDLKQCHKGTDADTDPGGSGKEM). Residues 1–60 (MRKRKGSADHDSSFTATLTDGSSDLKQCHKGTDADTDPGGSGKEMGRRCRRGGLMWRLRR) are Cytoplasmic-facing. The segment covering 13–25 (SFTATLTDGSSDL) has biased composition (polar residues). Residues 61-81 (ILIWLLGIYIAIPVIIKVCPS) traverse the membrane as a helical segment. The Extracellular portion of the chain corresponds to 82 to 382 (IQAKLVFLNF…DFLRAPHPHG (301 aa)). An N-linked (GlcNAc...) asparagine glycan is attached at Asn-109. Ser-232 serves as the catalytic Nucleophile. Residues Asp-319 and His-358 each act as charge relay system in the active site.

Belongs to the serine esterase family. Ubiquitously expressed in adult tissues.

It is found in the endoplasmic reticulum membrane. It catalyses the reaction 1-(9Z-octadecenoyl)-sn-glycero-3-phospho-L-serine + H2O = sn-glycero-3-phospho-L-serine + (9Z)-octadecenoate + H(+). The enzyme catalyses 1-(9Z-octadecenoyl)-sn-glycero-3-phospho-(1'-sn-glycerol) + H2O = sn-glycero-3-phospho-(1'-sn-glycerol) + (9Z)-octadecenoate + H(+). The catalysed reaction is 1-(9Z-octadecenoyl)-sn-glycero-3-phospho-(1D-myo-inositol) + H2O = sn-glycero-3-phospho-1D-myo-inositol + (9Z)-octadecenoate + H(+). It carries out the reaction 1-(9Z-octadecenoyl)-sn-glycero-3-phosphoethanolamine + H2O = sn-glycero-3-phosphoethanolamine + (9Z)-octadecenoate + H(+). It catalyses the reaction 1-(9Z-octadecenoyl)-sn-glycero-3-phosphocholine + H2O = 1-(9Z-octadecenoyl)-sn-glycerol + phosphocholine + H(+). The enzyme catalyses 2-(9Z-octadecenoyl)-glycerol + H2O = glycerol + (9Z)-octadecenoate + H(+). The catalysed reaction is 1-hexadecanoyl-sn-glycero-3-phospho-L-serine + H2O = sn-glycero-3-phospho-L-serine + hexadecanoate + H(+). It carries out the reaction 2-(5Z,8Z,11Z,14Z-eicosatetraenoyl)-glycerol + H2O = glycerol + (5Z,8Z,11Z,14Z)-eicosatetraenoate + H(+). It catalyses the reaction Hydrolyzes glycerol monoesters of long-chain fatty acids.. The enzyme catalyses 1-decanoylglycerol + H2O = decanoate + glycerol + H(+). The catalysed reaction is 1-dodecanoylglycerol + H2O = dodecanoate + glycerol + H(+). It carries out the reaction 1-tetradecanoylglycerol + H2O = tetradecanoate + glycerol + H(+). It catalyses the reaction 2-hexadecanoylglycerol + H2O = glycerol + hexadecanoate + H(+). The enzyme catalyses 1-(9Z-octadecenoyl)-glycerol + H2O = glycerol + (9Z)-octadecenoate + H(+). The catalysed reaction is 2-(9Z,12Z-octadecadienoyl)-glycerol + H2O = (9Z,12Z)-octadecadienoate + glycerol + H(+). It carries out the reaction 1-(5Z,8Z,11Z,14Z-eicosatetraenoyl)-glycerol + H2O = glycerol + (5Z,8Z,11Z,14Z)-eicosatetraenoate + H(+). It catalyses the reaction 1-(9Z,12Z-octadecadienoyl)-glycerol + H2O = (9Z,12Z)-octadecadienoate + glycerol + H(+). The enzyme catalyses 1-hexadecanoylglycerol + H2O = glycerol + hexadecanoate + H(+). The catalysed reaction is 1-octadecanoylglycerol + H2O = octadecanoate + glycerol + H(+). It carries out the reaction 1-octadecanoyl-2-(9,10-epoxyoctadecanoyl)-sn-glycero-3-phospho-L-serine + H2O = 9,10-epoxyoctadecanoate + 1-octadecanoyl-sn-glycero-3-phosphoserine + H(+). It catalyses the reaction 1-octadecanoyl-2-(10-hydroxyoctadecanoyl)-sn-glycero-3-phospho-L-serine + H2O = 1-octadecanoyl-sn-glycero-3-phosphoserine + 10-hydroxyoctadecanoate + H(+). The enzyme catalyses 1-hexadecanoyl-2-(10-hydroxyoctadecanoyl)-sn-glycero-3-phospho-L-serine + H2O = 10-hydroxyoctadecanoate + 1-hexadecanoyl-sn-glycero-3-phospho-L-serine + H(+). Lysophosphatidylserine (LPS) lipase that mediates the hydrolysis of lysophosphatidylserine, a class of signaling lipids that regulates immunological and neurological processes. Represents a major lysophosphatidylserine lipase in the brain, thereby playing a key role in the central nervous system. Also able to hydrolyze oxidized phosphatidylserine; oxidized phosphatidylserine is produced in response to severe inflammatory stress and constitutes a proapoptotic 'eat me' signal. Also has monoacylglycerol (MAG) lipase activity: hydrolyzes 2-arachidonoylglycerol (2-AG), thereby acting as a regulator of endocannabinoid signaling pathways. Has a strong preference for very-long-chain lipid substrates; substrate specificity is likely due to improved catalysis and not improved substrate binding. The polypeptide is Lysophosphatidylserine lipase ABHD12 (Danio rerio (Zebrafish)).